Here is a 490-residue protein sequence, read N- to C-terminus: 4-hydroxyphenylacetaldehyde synthase (490 aa).

Residues Pro97, His198, and His313 each coordinate L-phenylalanine. Lys314 is subject to N6-(pyridoxal phosphate)lysine. L-phenylalanine is bound at residue Phe343.

This sequence belongs to the group II decarboxylase family. Homodimer. Pyridoxal 5'-phosphate is required as a cofactor.

It carries out the reaction L-tyrosine + O2 + H2O + H(+) = (4-hydroxyphenyl)acetaldehyde + H2O2 + NH4(+) + CO2. Its function is as follows. Catalyzes the production of 4-hydroxyphenylacetaldehyde (HPAA) directly from L-tyrosine, tyramine not being formed as an intermediate. This chain is 4-hydroxyphenylacetaldehyde synthase, found in Rhodiola rosea (Roseroot).